A 745-amino-acid polypeptide reads, in one-letter code: MITSLSQISFGTLRRFGSSVLPSALKREFVEGLRTLVRSGDIRRAVSLFYSAPVELQSQQAYAALFQACAEQRNLLDGINLHHHMLSHPYCYSQNVILANFLINMYAKCGNILYARQVFDTMPERNVVSWTALITGYVQAGNEQEGFCLFSSMLSHCFPNEFTLSSVLTSCRYEPGKQVHGLALKLGLHCSIYVANAVISMYGRCHDGAAAYEAWTVFEAIKFKNLVTWNSMIAAFQCCNLGKKAIGVFMRMHSDGVGFDRATLLNICSSLYKSSDLVPNEVSKCCLQLHSLTVKSGLVTQTEVATALIKVYSEMLEDYTDCYKLFMEMSHCRDIVAWNGIITAFAVYDPERAIHLFGQLRQEKLSPDWYTFSSVLKACAGLVTARHALSIHAQVIKGGFLADTVLNNSLIHAYAKCGSLDLCMRVFDDMDSRDVVSWNSMLKAYSLHGQVDSILPVFQKMDINPDSATFIALLSACSHAGRVEEGLRIFRSMFEKPETLPQLNHYACVIDMLSRAERFAEAEEVIKQMPMDPDAVVWIALLGSCRKHGNTRLGKLAADKLKELVEPTNSMSYIQMSNIYNAEGSFNEANLSIKEMETWRVRKEPDLSWTEIGNKVHEFASGGRHRPDKEAVYRELKRLISWLKEMGYVPEMRSASQDIEDEEQEEDNLLHHSEKLALAFAVMEGRKSSDCGVNLIQIMKNTRICIDCHNFMKLASKLLGKEILMRDSNRFHHFKDSSCSCNDYW.

PPR repeat units lie at residues 58–88 (SQQA…MLSH), 95–125 (NVIL…MPER), 126–160 (NVVS…CFPN), 191–224 (SIYV…IKFK), 225–259 (NLVT…GVGF), 260–296 (DRAT…TVKS), 301–332 (QTEV…MSHC), 334–367 (DIVA…KLSP), 368–402 (DWYT…GFLA), 403–437 (DTVL…DVVS), 438–464 (WNSM…MDIN), 466–496 (DSAT…MFEK), and 502–532 (QLNH…MPMD). Positions 537-613 (VWIALLGSCR…EPDLSWTEIG (77 aa)) are type E motif. Residues 614-644 (NKVHEFASGGRHRPDKEAVYRELKRLISWLK) are type E(+) motif. Residues 645–745 (EMGYVPEMRS…DSSCSCNDYW (101 aa)) are type DYW motif.

This sequence belongs to the PPR family. PCMP-H subfamily.

The polypeptide is Pentatricopeptide repeat-containing protein At1g71420 (PCMP-H70) (Arabidopsis thaliana (Mouse-ear cress)).